A 61-amino-acid chain; its full sequence is Small ribosomal subunit protein uS14 (61 aa).

The Zn(2+) site is built by Cys24, Cys27, Cys40, and Cys43.

The protein belongs to the universal ribosomal protein uS14 family. Zinc-binding uS14 subfamily. As to quaternary structure, part of the 30S ribosomal subunit. Contacts proteins S3 and S10. Zn(2+) is required as a cofactor.

In terms of biological role, binds 16S rRNA, required for the assembly of 30S particles and may also be responsible for determining the conformation of the 16S rRNA at the A site. This chain is Small ribosomal subunit protein uS14, found in Mycobacterium sp. (strain JLS).